We begin with the raw amino-acid sequence, 1226 residues long: Polyamine-transporting ATPase 13A3 (1226 aa).

Residues 1–28 (MDREERKTINQGQEDEMEIYGYNLSRWK) are Cytoplasmic-facing. The stretch at 29 to 49 (LAIVSLGVICSGGFLLLLLYW) is an intramembrane region. Topologically, residues 50 to 205 (MPEWRVKATC…IAVKVPSVFK (156 aa)) are cytoplasmic. Residue S98 is modified to Phosphoserine. The helical transmembrane segment at 206–226 (LLIKEVLNPFYIFQLFSVILW) threads the bilayer. The Lumenal portion of the chain corresponds to 227-232 (STDEYY). The helical transmembrane segment at 233 to 253 (YYALAIVVMSIVSIVSSLYSI) threads the bilayer. Residues 254 to 409 (RKQYVMLHDM…KPTDFKLYRD (156 aa)) are Cytoplasmic-facing. The helical transmembrane segment at 410–430 (AYLFLLCLVAVAGIGFIYTII) threads the bilayer. Over 431–448 (NSILNEVQVGVIIIESLD) the chain is Lumenal. The chain crosses the membrane as a helical span at residues 449-469 (IITITVPPALPAAMTAGIVYA). Residues 470–940 (QRRLKKIGIF…ALITSFCVFK (471 aa)) lie on the Cytoplasmic side of the membrane. D498 acts as the 4-aspartylphosphate intermediate in catalysis. The Mg(2+) site is built by D498 and T500. ATP contacts are provided by residues 498–500 (DKT), F628, R684, and D750. S817 bears the Phosphoserine mark. Residues D883 and D887 each contribute to the Mg(2+) site. Residue 883-887 (DGAND) participates in ATP binding. A helical membrane pass occupies residues 941-961 (FMALYSIIQYFSVTLLYSILS). N962 is a topological domain (lumenal). Residues 963-983 (LGDFQFLFIDLAIILVVVFTM) form a helical membrane-spanning segment. At 984–999 (SLNPAWKELVAQRPPS) the chain is on the cytoplasmic side. A helical transmembrane segment spans residues 1000-1020 (GLISGALLFSVLSQIIICIGF). Topologically, residues 1021–1073 (QSLGFFWVKQQPWYEVWHPKSDACNTTGSGFWNSSHVDNETELDEHNIQNYEN) are lumenal. A helical membrane pass occupies residues 1074 to 1094 (TTVFFISSFQYLIVAIAFSKG). Topologically, residues 1095–1105 (KPFRQPCYKNY) are cytoplasmic. A helical membrane pass occupies residues 1106–1126 (FFVFSVIFLYIFILFIMLYPV). The Lumenal segment spans residues 1127-1143 (ASVDQVLQIVCVPYQWR). A helical membrane pass occupies residues 1144–1164 (VTMLIIVLVNAFVSITVEESV). Topologically, residues 1165 to 1226 (DRWGKCCLPW…NGSCQIITIT (62 aa)) are cytoplasmic.

This sequence belongs to the cation transport ATPase (P-type) (TC 3.A.3) family. Type V subfamily. In terms of tissue distribution, broadly expressed.

Its subcellular location is the recycling endosome membrane. It is found in the early endosome membrane. The protein localises to the late endosome membrane. It carries out the reaction putrescine(out) + ATP + H2O = putrescine(in) + ADP + phosphate + H(+). ATP-driven pump involved in endocytosis-dependent polyamine transport. Uses ATP as an energy source to transfer polyamine precursor putrescine from the endosomal compartment to the cytosol. In Homo sapiens (Human), this protein is Polyamine-transporting ATPase 13A3.